A 311-amino-acid chain; its full sequence is Malate dehydrogenase (311 aa).

NAD(+)-binding positions include 7–13 (GAAGGIG) and D34. Substrate contacts are provided by R81 and R87. Residues N94 and 117-119 (ITN) each bind NAD(+). The substrate site is built by N119 and R153. H177 (proton acceptor) is an active-site residue. M227 provides a ligand contact to NAD(+).

Belongs to the LDH/MDH superfamily. MDH type 1 family. In terms of assembly, homodimer.

It catalyses the reaction (S)-malate + NAD(+) = oxaloacetate + NADH + H(+). Its function is as follows. Catalyzes the reversible oxidation of malate to oxaloacetate. This Shewanella loihica (strain ATCC BAA-1088 / PV-4) protein is Malate dehydrogenase.